We begin with the raw amino-acid sequence, 147 residues long: Large ribosomal subunit protein uL13 (147 aa).

It belongs to the universal ribosomal protein uL13 family. Part of the 50S ribosomal subunit.

In terms of biological role, this protein is one of the early assembly proteins of the 50S ribosomal subunit, although it is not seen to bind rRNA by itself. It is important during the early stages of 50S assembly. The protein is Large ribosomal subunit protein uL13 of Lactobacillus delbrueckii subsp. bulgaricus (strain ATCC 11842 / DSM 20081 / BCRC 10696 / JCM 1002 / NBRC 13953 / NCIMB 11778 / NCTC 12712 / WDCM 00102 / Lb 14).